The following is a 163-amino-acid chain: Small ribosomal subunit protein uS3m (163 aa).

Residues 1 to 31 (MAASLIRQTKLLSVFSSAGCFRSIHSTAACL) constitute a mitochondrion transit peptide.

This sequence belongs to the universal ribosomal protein uS3 family. In terms of assembly, component of the mitochondrial ribosome small subunit (28S) which comprises a 12S rRNA and about 30 distinct proteins.

The protein localises to the mitochondrion. The polypeptide is Small ribosomal subunit protein uS3m (mrps24) (Danio rerio (Zebrafish)).